The primary structure comprises 491 residues: MSDDKNQIKIKFTTNESDESLKVEETPLYVPVTLKRYGLSEIVNHLLETQKALESESGEDDEERKPVPFNFLINGELLRTSISDYLTRNGLSSEAFLTIEYTRAILPPSFQASFQNDDWISSLDSINRNLSAVTSSQLTITNPKILSGSYDGIVKTYNMSGKVEKQYMGHSAAVKSVKWISPTRIVSCGNDQQVRLWKTAYEGVVDQNEEDEEENEANEGDDGDNDMEKIEDGKTLAILEGHKAPVVDLAVNQQTKRILSAGYDLNVGFWSTNYKDMAKISIPEYDSNVISTSSKKRRKLALQDATIRRRSPLSLLLGHTEPVEGVIFDELDATVGYSVSQDHTIKTWDLVTLRCVDTRTTGFSLLSILQLPQVNLIATGSSARHINLHDPRVSASNTNSEVVNTKLVGHTNFVVGLSASPHNSNMFASSSHDGTVKVWDIRADKSLYTITREDGSTKSKIFGVCWDSEIGLISGGEDKRVQINKGSDISK.

The interval 8-103 is ubiquitin-like (UBL) domain; the sequence is IKIKFTTNES…EAFLTIEYTR (96 aa). The tract at residues 113-491 is sufficient for interaction with ERB1 and association with 66S pre-ribosomes; it reads SFQNDDWISS…QINKGSDISK (379 aa). 7 WD repeats span residues 128 to 167, 169 to 207, 241 to 280, 318 to 358, 360 to 399, 409 to 449, and 456 to 491; these read RNLSAVTSSQLTITNPKILSGSYDGIVKTYNMSGKVEKQY, GHSAAVKSVKWISPTRIVSCGNDQQVRLWKTAYEGVVDQ, GHKAPVVDLAVNQQTKRILSAGYDLNVGFWSTNYKDMAKI, GHTE…CVDT, TTGFSLLSILQLPQVNLIATGSSARHINLHDPRVSASNTN, GHTN…SLYT, and STKSKIFGVCWDSEIGLISGGEDKRVQINKGSDISK. Residues 205–228 are disordered; it reads VDQNEEDEEENEANEGDDGDNDME. Residues 207 to 225 are compositionally biased toward acidic residues; that stretch reads QNEEDEEENEANEGDDGDN.

The protein belongs to the WD repeat WDR12/YTM1 family. Component of the NOP7 complex, composed of ERB1, NOP7 and YTM1. The complex is held together by ERB1, which interacts with NOP7 via its N-terminal domain and with YTM1 via a high-affinity interaction between the seven-bladed beta-propeller domains of the 2 proteins. The NOP7 complex associates with the 66S pre-ribosome. Interacts (via UBL domain) with MDN1 (via VWFA/MIDAS domain).

It localises to the nucleus. Its subcellular location is the nucleolus. The protein localises to the nucleoplasm. Its function is as follows. Component of the NOP7 complex, which is required for maturation of the 25S and 5.8S ribosomal RNAs and formation of the 60S ribosome. In Lodderomyces elongisporus (strain ATCC 11503 / CBS 2605 / JCM 1781 / NBRC 1676 / NRRL YB-4239) (Yeast), this protein is Ribosome biogenesis protein YTM1.